A 131-amino-acid chain; its full sequence is uncharacterized protein (131 aa).

This is an uncharacterized protein from Saccharomyces cerevisiae (strain ATCC 204508 / S288c) (Baker's yeast).